A 197-amino-acid polypeptide reads, in one-letter code: RNA pyrophosphohydrolase (197 aa).

Residues 6–150 enclose the Nudix hydrolase domain; the sequence is GYRPNVGIVI…KRDVYRKVMR (145 aa). Residues 38 to 59 carry the Nudix box motif; sequence GGINEGENIETAMYRELYEEVG.

This sequence belongs to the Nudix hydrolase family. RppH subfamily. It depends on a divalent metal cation as a cofactor.

Accelerates the degradation of transcripts by removing pyrophosphate from the 5'-end of triphosphorylated RNA, leading to a more labile monophosphorylated state that can stimulate subsequent ribonuclease cleavage. In Haemophilus ducreyi (strain 35000HP / ATCC 700724), this protein is RNA pyrophosphohydrolase.